Consider the following 209-residue polypeptide: Thymidylate kinase (209 aa).

Residue 7 to 14 (GIDGAGKS) coordinates ATP.

It belongs to the thymidylate kinase family.

It catalyses the reaction dTMP + ATP = dTDP + ADP. Its function is as follows. Phosphorylation of dTMP to form dTDP in both de novo and salvage pathways of dTTP synthesis. This is Thymidylate kinase from Mycoplasma mobile (strain ATCC 43663 / 163K / NCTC 11711) (Mesomycoplasma mobile).